The sequence spans 635 residues: Threonine--tRNA ligase (635 aa).

The TGS domain occupies 1–61 (MIQITLPDAS…EKDSALSIIT (61 aa)). Residues 242–533 (DHRKLGKELD…LIEEHAGALP (292 aa)) form a catalytic region. Residues Cys-333, His-384, and His-510 each coordinate Zn(2+).

Belongs to the class-II aminoacyl-tRNA synthetase family. In terms of assembly, homodimer. Zn(2+) is required as a cofactor.

The protein localises to the cytoplasm. The catalysed reaction is tRNA(Thr) + L-threonine + ATP = L-threonyl-tRNA(Thr) + AMP + diphosphate + H(+). Its function is as follows. Catalyzes the attachment of threonine to tRNA(Thr) in a two-step reaction: L-threonine is first activated by ATP to form Thr-AMP and then transferred to the acceptor end of tRNA(Thr). Also edits incorrectly charged L-seryl-tRNA(Thr). This Polaromonas sp. (strain JS666 / ATCC BAA-500) protein is Threonine--tRNA ligase.